Consider the following 539-residue polypeptide: Glucans biosynthesis protein D (539 aa).

Positions 1–29 (MNRRNLLKASMALAAYGSVSASGLFAARA) form a signal peptide, tat-type signal.

Belongs to the OpgD/OpgG family. In terms of processing, predicted to be exported by the Tat system. The position of the signal peptide cleavage has not been experimentally proven.

Its subcellular location is the periplasm. It participates in glycan metabolism; osmoregulated periplasmic glucan (OPG) biosynthesis. Functionally, probably involved in the control of the structural glucose backbone of osmoregulated periplasmic glucans (OPGs). The sequence is that of Glucans biosynthesis protein D from Pseudomonas syringae pv. syringae (strain B728a).